The sequence spans 513 residues: ATP synthase subunit alpha (513 aa).

169–176 contributes to the ATP binding site; that stretch reads GDRQIGKT.

Belongs to the ATPase alpha/beta chains family. As to quaternary structure, F-type ATPases have 2 components, CF(1) - the catalytic core - and CF(0) - the membrane proton channel. CF(1) has five subunits: alpha(3), beta(3), gamma(1), delta(1), epsilon(1). CF(0) has three main subunits: a(1), b(2) and c(9-12). The alpha and beta chains form an alternating ring which encloses part of the gamma chain. CF(1) is attached to CF(0) by a central stalk formed by the gamma and epsilon chains, while a peripheral stalk is formed by the delta and b chains.

Its subcellular location is the cell inner membrane. The enzyme catalyses ATP + H2O + 4 H(+)(in) = ADP + phosphate + 5 H(+)(out). Produces ATP from ADP in the presence of a proton gradient across the membrane. The alpha chain is a regulatory subunit. The polypeptide is ATP synthase subunit alpha (Francisella tularensis subsp. novicida (strain U112)).